Here is a 452-residue protein sequence, read N- to C-terminus: Enolase (452 aa).

Glutamine 167 is a (2R)-2-phosphoglycerate binding site. Glutamate 209 serves as the catalytic Proton donor. Positions 250, 307, and 334 each coordinate Mg(2+). 4 residues coordinate (2R)-2-phosphoglycerate: lysine 359, arginine 388, serine 389, and lysine 410. Residue lysine 359 is the Proton acceptor of the active site.

This sequence belongs to the enolase family. Mg(2+) is required as a cofactor.

Its subcellular location is the cytoplasm. The protein localises to the secreted. It localises to the cell surface. The enzyme catalyses (2R)-2-phosphoglycerate = phosphoenolpyruvate + H2O. The protein operates within carbohydrate degradation; glycolysis; pyruvate from D-glyceraldehyde 3-phosphate: step 4/5. Functionally, catalyzes the reversible conversion of 2-phosphoglycerate (2-PG) into phosphoenolpyruvate (PEP). It is essential for the degradation of carbohydrates via glycolysis. This is Enolase from Mesomycoplasma hyopneumoniae (strain 232) (Mycoplasma hyopneumoniae).